A 126-amino-acid polypeptide reads, in one-letter code: Probable prefoldin subunit 6 (126 aa).

This sequence belongs to the prefoldin subunit beta family. Heterohexamer of two PFD-alpha type and four PFD-beta type subunits. As to expression, expressed in embryonic blastomeres and gonads.

The protein resides in the cytoplasm. In terms of biological role, binds specifically to cytosolic chaperonin (c-CPN) and transfers target proteins to it. Binds to nascent polypeptide chain and promotes folding in an environment in which there are many competing pathways for nonnative proteins. Required for positioning of the mitotic spindle. This is Probable prefoldin subunit 6 (pfd-6) from Caenorhabditis elegans.